The sequence spans 502 residues: Glycerol kinase (502 aa).

T14 contributes to the ADP binding site. Positions 14, 15, and 16 each coordinate ATP. Position 14 (T14) interacts with sn-glycerol 3-phosphate. An ADP-binding site is contributed by R18. Residues R84, E85, Y136, and D246 each contribute to the sn-glycerol 3-phosphate site. R84, E85, Y136, D246, and Q247 together coordinate glycerol. Positions 268 and 311 each coordinate ADP. Positions 268, 311, 315, and 412 each coordinate ATP. The ADP site is built by G412 and N416.

It belongs to the FGGY kinase family. Homotetramer and homodimer (in equilibrium). Heterodimer with EIIA-Glc. Binds 1 zinc ion per glycerol kinase EIIA-Glc dimer. The zinc ion is important for dimerization.

The enzyme catalyses glycerol + ATP = sn-glycerol 3-phosphate + ADP + H(+). Its pathway is polyol metabolism; glycerol degradation via glycerol kinase pathway; sn-glycerol 3-phosphate from glycerol: step 1/1. With respect to regulation, activity of this regulatory enzyme is affected by several metabolites. Allosterically and non-competitively inhibited by fructose 1,6-bisphosphate (FBP) and unphosphorylated phosphocarrier protein EIIA-Glc (III-Glc), an integral component of the bacterial phosphotransferase (PTS) system. Its function is as follows. Key enzyme in the regulation of glycerol uptake and metabolism. Catalyzes the phosphorylation of glycerol to yield sn-glycerol 3-phosphate. This chain is Glycerol kinase, found in Escherichia coli O8 (strain IAI1).